We begin with the raw amino-acid sequence, 190 residues long: UPF0301 protein Psyr_0485 (190 aa).

It belongs to the UPF0301 (AlgH) family.

The polypeptide is UPF0301 protein Psyr_0485 (Pseudomonas syringae pv. syringae (strain B728a)).